The chain runs to 96 residues: MKPIFIVALLFSTCLVNAKPSIDDAEMKREPKPNIINPPCIGCYYQVGNECVYDKFKCGAVRKREPKPNIINPPCIGCYYQVGNECVYDKFKCGAV.

The first 18 residues, 1-18, serve as a signal peptide directing secretion; it reads MKPIFIVALLFSTCLVNA. 2 propeptides span residues 19–29 and 30–33; these read KPSIDDAEMKR and EPKP. Intrachain disulfides connect C40-C51 and C43-C58. 2 consecutive propeptides follow at residues 62 to 64 and 65 to 68; these read RKR and EPKP. 2 disulfides stabilise this stretch: C75/C86 and C78/C93.

This sequence belongs to the sea anemone BBH family.

The protein localises to the secreted. Its subcellular location is the nematocyst. Functionally, neurotoxin that paralyzes freshwater crabs at high concentration. This Heteractis aurora (Banded sea anemone) protein is U-stichotoxin-Hau2b.